Here is a 308-residue protein sequence, read N- to C-terminus: MKPPGDNAPAGCPFSGARAAQPAHEAPHVPGDAAGETGWHDAQLDFSKSMSYGDYLSLNSILDAQHPLSPDHNEMLFIIQHQTSELWMKLALFELRGALDAVRGDALPPAFKMLARVSRILEQLVQAWNVLSTMTPSEYSAMRPYLGQSSGFQSYQYRQLEFLLGNKNVQMLQPHAHRPDILEQVRATLEAPSFYDEVVRLLARRGFPIASERLERDWTQPMRHDETVEAAWLEVYRHPQQHWELYEMAEELVDLEDAFRQWRFRHVTTVERIIGFKQGTGGTSGAPYLRKMLDVVLFPELWHVRTTL.

Positions 1-37 (MKPPGDNAPAGCPFSGARAAQPAHEAPHVPGDAAGET) are disordered. Residues 77–81 (FIIQH), Tyr139, and Arg143 each bind substrate. Heme is bound at residue His266. Residue Thr280 participates in substrate binding.

It belongs to the tryptophan 2,3-dioxygenase family. Homotetramer. The cofactor is heme.

The catalysed reaction is L-tryptophan + O2 = N-formyl-L-kynurenine. It participates in amino-acid degradation; L-tryptophan degradation via kynurenine pathway; L-kynurenine from L-tryptophan: step 1/2. Heme-dependent dioxygenase that catalyzes the oxidative cleavage of the L-tryptophan (L-Trp) pyrrole ring and converts L-tryptophan to N-formyl-L-kynurenine. Catalyzes the oxidative cleavage of the indole moiety. This Burkholderia ambifaria (strain MC40-6) protein is Tryptophan 2,3-dioxygenase.